Reading from the N-terminus, the 277-residue chain is NADPH-dependent 7-cyano-7-deazaguanine reductase (277 aa).

Substrate is bound at residue 83-85; that stretch reads VES. Position 85 to 86 (85 to 86) interacts with NADPH; sequence SK. Cysteine 184 (thioimide intermediate) is an active-site residue. Residue aspartate 191 is the Proton donor of the active site. Residue 223–224 coordinates substrate; the sequence is HE. Residue 252-253 coordinates NADPH; sequence RG.

The protein belongs to the GTP cyclohydrolase I family. QueF type 2 subfamily. As to quaternary structure, homodimer.

The protein localises to the cytoplasm. The catalysed reaction is 7-aminomethyl-7-carbaguanine + 2 NADP(+) = 7-cyano-7-deazaguanine + 2 NADPH + 3 H(+). It participates in tRNA modification; tRNA-queuosine biosynthesis. Catalyzes the NADPH-dependent reduction of 7-cyano-7-deazaguanine (preQ0) to 7-aminomethyl-7-deazaguanine (preQ1). This Cupriavidus metallidurans (strain ATCC 43123 / DSM 2839 / NBRC 102507 / CH34) (Ralstonia metallidurans) protein is NADPH-dependent 7-cyano-7-deazaguanine reductase.